The sequence spans 121 residues: Ribosome-binding factor A (121 aa).

It belongs to the RbfA family. Monomer. Binds 30S ribosomal subunits, but not 50S ribosomal subunits or 70S ribosomes.

Its subcellular location is the cytoplasm. In terms of biological role, one of several proteins that assist in the late maturation steps of the functional core of the 30S ribosomal subunit. Associates with free 30S ribosomal subunits (but not with 30S subunits that are part of 70S ribosomes or polysomes). Required for efficient processing of 16S rRNA. May interact with the 5'-terminal helix region of 16S rRNA. In Agathobacter rectalis (strain ATCC 33656 / DSM 3377 / JCM 17463 / KCTC 5835 / VPI 0990) (Eubacterium rectale), this protein is Ribosome-binding factor A.